The following is a 320-amino-acid chain: o-succinylbenzoate synthase (320 aa).

Lys133 (proton donor) is an active-site residue. 3 residues coordinate Mg(2+): Asp161, Glu190, and Asp213. Lys235 serves as the catalytic Proton acceptor.

Belongs to the mandelate racemase/muconate lactonizing enzyme family. MenC type 1 subfamily. It depends on a divalent metal cation as a cofactor.

The catalysed reaction is (1R,6R)-6-hydroxy-2-succinyl-cyclohexa-2,4-diene-1-carboxylate = 2-succinylbenzoate + H2O. Its pathway is quinol/quinone metabolism; 1,4-dihydroxy-2-naphthoate biosynthesis; 1,4-dihydroxy-2-naphthoate from chorismate: step 4/7. It participates in quinol/quinone metabolism; menaquinone biosynthesis. In terms of biological role, converts 2-succinyl-6-hydroxy-2,4-cyclohexadiene-1-carboxylate (SHCHC) to 2-succinylbenzoate (OSB). The polypeptide is o-succinylbenzoate synthase (Escherichia coli O9:H4 (strain HS)).